Consider the following 940-residue polypeptide: Glutamate receptor 2.9 (940 aa).

Positions 1-23 are cleaved as a signal peptide; that stretch reads MKTNNTFLSYFVCGFLLMGVGLG. Topologically, residues 24-566 are extracellular; it reads QNQTSEIKVG…DTWVFLEPWS (543 aa). N-linked (GlcNAc...) asparagine glycosylation is found at asparagine 25, asparagine 39, asparagine 115, asparagine 338, asparagine 345, and asparagine 528. The chain crosses the membrane as a helical span at residues 567–587; it reads LELWVTTGCFFVFIGFVVWLF. The Cytoplasmic segment spans residues 588-596; sequence EHRVNTDFR. Residues 597 to 617 form a helical membrane-spanning segment; it reads GPPQYQIGTSLWFSFSTMVFA. Residues 618 to 628 lie on the Cytoplasmic side of the membrane; that stretch reads HRENVVSNLAR. A helical transmembrane segment spans residues 629-649; that stretch reads FVVVVWCFVVLVLTQSYTASL. Topologically, residues 650–811 are extracellular; it reads TSFLTVQSLQ…NRLNLSSFLG (162 aa). Residues asparagine 771, asparagine 776, and asparagine 805 are each glycosylated (N-linked (GlcNAc...) asparagine). The chain crosses the membrane as a helical span at residues 812–832; sequence LFLIAGTAISFSLLVFVALFL. Residues 833–940 lie on the Cytoplasmic side of the membrane; that stretch reads YEHRHTLGDD…ESDIECRVEQ (108 aa). Disordered stretches follow at residues 876 to 900 and 914 to 940; these read ISSP…QSPS and PSEE…RVEQ.

The protein belongs to the glutamate-gated ion channel (TC 1.A.10.1) family. May form heteromers. Expressed predominantly in roots.

Its subcellular location is the membrane. In terms of biological role, glutamate-gated receptor that probably acts as a non-selective cation channel. May be involved in light-signal transduction and calcium homeostasis via the regulation of calcium influx into cells. The chain is Glutamate receptor 2.9 (GLR2.9) from Arabidopsis thaliana (Mouse-ear cress).